The primary structure comprises 319 residues: Peroxidase 62 (319 aa).

The signal sequence occupies residues 1–22; the sequence is MGLVRSFALVIVFLSCLIAVYG. 4 disulfides stabilise this stretch: Cys34/Cys110, Cys67/Cys72, Cys116/Cys315, and Cys195/Cys226. The Proton acceptor role is filled by His65. Ca(2+) is bound by residues Asp66, Val69, Gly71, Asp73, and Ser75. Pro157 contributes to the substrate binding site. Residue His188 coordinates heme b. Residue Thr189 participates in Ca(2+) binding. Asn204 carries an N-linked (GlcNAc...) asparagine glycan. Ca(2+) contacts are provided by Asp239, Ser242, and Asp247. N-linked (GlcNAc...) asparagine glycosylation occurs at Asn253.

This sequence belongs to the peroxidase family. Classical plant (class III) peroxidase subfamily. Heme b serves as cofactor. It depends on Ca(2+) as a cofactor. In terms of tissue distribution, mainly expressed in roots.

The protein localises to the secreted. The catalysed reaction is 2 a phenolic donor + H2O2 = 2 a phenolic radical donor + 2 H2O. Functionally, removal of H(2)O(2), oxidation of toxic reductants, biosynthesis and degradation of lignin, suberization, auxin catabolism, response to environmental stresses such as wounding, pathogen attack and oxidative stress. These functions might be dependent on each isozyme/isoform in each plant tissue. This is Peroxidase 62 (PER62) from Arabidopsis thaliana (Mouse-ear cress).